A 444-amino-acid chain; its full sequence is Phosphoglucosamine mutase (444 aa).

The Phosphoserine intermediate role is filled by Ser-103. Residues Ser-103, Asp-241, Asp-243, and Asp-245 each coordinate Mg(2+). Ser-103 is subject to Phosphoserine.

Belongs to the phosphohexose mutase family. It depends on Mg(2+) as a cofactor. Activated by phosphorylation.

The catalysed reaction is alpha-D-glucosamine 1-phosphate = D-glucosamine 6-phosphate. Its function is as follows. Catalyzes the conversion of glucosamine-6-phosphate to glucosamine-1-phosphate. The protein is Phosphoglucosamine mutase of Deinococcus geothermalis (strain DSM 11300 / CIP 105573 / AG-3a).